Consider the following 434-residue polypeptide: KH domain-containing protein 3 (434 aa).

The involved in RNA binding stretch occupies residues 1-39; sequence MATLKTFRTLVQLKHKLGKAYEIVGEPRLPKWFHVEYLE. Residues 40–118 enclose the KH; atypical domain; the sequence is DPKKMYVEPT…CRMKLMEKEA (79 aa). A phosphothreonine mark is found at threonine 267 and threonine 279. Residues 334–434 form a required for interaction with NUMA1 and regulation of apoptosis in response to DNA damage region; it reads VREAATQQTP…RAVWEPFVML (101 aa).

Belongs to the KHDC1 family. As to quaternary structure, component of the subcortical maternal complex (SCMC), at least composed of NLRP5, KHDC3, OOEP, and TLE6. Within the complex, interacts with NLRP5, KHDC3 and TLE6. The SCMC may facilitate translocation of its components between the nuclear and cytoplasmic compartments. Forms a scaffold complex with OOEP/FLOPED, and interacts with BLM and TRIM25 at DNA replication forks. Interacts with PARP1; the interaction is increased following the formation of DNA double-strand breaks. Interacts (via C-terminus) with NUMA1.

Its subcellular location is the cytoplasm. It localises to the cell cortex. It is found in the nucleus. The protein localises to the mitochondrion. The protein resides in the cytoskeleton. Its subcellular location is the microtubule organizing center. It localises to the centrosome. It is found in the chromosome. Functionally, component of the subcortical maternal complex (SCMC), a multiprotein complex that plays a key role in early embryonic development. The SCMC complex is a structural constituent of cytoplasmic lattices, which consist in fibrous structures found in the cytoplasm of oocytes and preimplantation embryos. They are required to store maternal proteins critical for embryonic development, such as proteins that control epigenetic reprogramming of the preimplantation embryo, and prevent their degradation or activation. KHDC3 ensures proper spindle assembly by regulating the localization of AURKA via RHOA signaling and of PLK1 via a RHOA-independent process. Required for the localization of MAD2L1 to kinetochores to enable spindle assembly checkpoint function. As part of the OOEP-KHDC3 scaffold, recruits BLM and TRIM25 to DNA replication forks, thereby promoting the ubiquitination of BLM by TRIM25, enhancing BLM retainment at replication forks and therefore promoting stalled replication fork restart. Regulates homologous recombination-mediated DNA repair via recruitment of RAD51 to sites of DNA double-strand breaks, and sustainment of PARP1 activity, which in turn modulates downstream ATM or ATR activation. Activation of ATM or ATR in response to DNA double-strand breaks may be cell-type specific. Its role in DNA double-strand break repair is independent of its role in restarting stalled replication forks. Promotes neural stem cell neurogenesis and neuronal differentiation in the hippocampus. May regulate normal development of learning, memory and anxiety. Capable of binding RNA. This Rattus norvegicus (Rat) protein is KH domain-containing protein 3.